We begin with the raw amino-acid sequence, 82 residues long: Cell division topological specificity factor (82 aa).

It belongs to the MinE family.

Prevents the cell division inhibition by proteins MinC and MinD at internal division sites while permitting inhibition at polar sites. This ensures cell division at the proper site by restricting the formation of a division septum at the midpoint of the long axis of the cell. In Buchnera aphidicola subsp. Cinara cedri (strain Cc), this protein is Cell division topological specificity factor.